The sequence spans 366 residues: Flagellar P-ring protein (366 aa).

A signal peptide spans 1 to 20; the sequence is MVIKFLSALILLLVTTAAQA.

Belongs to the FlgI family. The basal body constitutes a major portion of the flagellar organelle and consists of four rings (L,P,S, and M) mounted on a central rod.

It is found in the periplasm. The protein localises to the bacterial flagellum basal body. Assembles around the rod to form the L-ring and probably protects the motor/basal body from shearing forces during rotation. This Escherichia coli (strain UTI89 / UPEC) protein is Flagellar P-ring protein.